Consider the following 686-residue polypeptide: Delta-like protein 4 (686 aa).

An N-terminal signal peptide occupies residues 1 to 27 (MTPGSRSACRWALLLLAVLWPQQRAAG). The Extracellular segment spans residues 28–530 (SGIFQLRLQE…PVGLPPSFPW (503 aa)). 2 disulfides stabilise this stretch: Cys51/Cys55 and Cys62/Cys75. N-linked (GlcNAc...) asparagine glycans are attached at residues Asn79, Asn109, and Asn162. A DSL domain is found at 174–218 (VVCSDNYYGDSCSRLCKKRDDHFGHYECQPDGSLSCLPGWTGKYC). An intrachain disulfide couples Cys176 to Cys185. Interaction with Notch1 stretches follow at residues 186–188 (SRL) and 192–196 (RDDHF). Intrachain disulfides connect Cys189–Cys201, Cys209–Cys218, Cys223–Cys234, Cys227–Cys240, Cys242–Cys251, Cys254–Cys265, Cys260–Cys271, Cys273–Cys282, Cys289–Cys301, Cys295–Cys311, Cys313–Cys322, Cys329–Cys340, Cys334–Cys349, Cys351–Cys360, Cys367–Cys378, Cys372–Cys389, Cys391–Cys400, Cys407–Cys418, Cys412–Cys427, Cys429–Cys438, Cys445–Cys456, Cys450–Cys465, Cys467–Cys476, Cys485–Cys496, Cys490–Cys507, and Cys509–Cys518. EGF-like domains follow at residues 219 to 252 (DQPI…PLCN), 256 to 283 (PHNG…LFCD), 285 to 323 (DLNY…EHCE), 325 to 361 (ELSK…QHCE), 363 to 401 (STLT…SNCE), 403 to 439 (KVDR…THCE), 441 to 477 (HISD…RRCE), and 481 to 519 (TNDA…SRCE). The helical transmembrane segment at 531–551 (VAVSLGVGLVVLLVLLVMVAV) threads the bilayer. Topologically, residues 552–686 (AVRQLRLRRP…RNECVIATEV (135 aa)) are cytoplasmic.

As to quaternary structure, interacts with NOTCH4. Interacts (via N-terminal DSL and MNNL domains) with NOTCH1 (via EGF-like domains).

Its subcellular location is the cell membrane. Functionally, involved in the Notch signaling pathway as Notch ligand. Activates NOTCH1 and NOTCH4. Involved in angiogenesis; negatively regulates endothelial cell proliferation and migration and angiogenic sprouting. Essential for retinal progenitor proliferation. Required for suppressing rod fates in late retinal progenitors as well as for proper generation of other retinal cell types. During spinal cord neurogenesis, inhibits V2a interneuron fate. This is Delta-like protein 4 from Rattus norvegicus (Rat).